Reading from the N-terminus, the 258-residue chain is Regulatory protein RecX (258 aa).

Belongs to the RecX family.

It is found in the cytoplasm. Functionally, modulates RecA activity. This is Regulatory protein RecX from Streptococcus agalactiae serotype Ia (strain ATCC 27591 / A909 / CDC SS700).